Here is a 362-residue protein sequence, read N- to C-terminus: Hydroxycarboxylate dehydrogenase A (362 aa).

Zn(2+)-binding residues include D173, H257, and H274.

It belongs to the iron-containing alcohol dehydrogenase family. It depends on Zn(2+) as a cofactor.

The enzyme catalyses 2-hydroxybutanoate + NADP(+) = 2-oxobutanoate + NADPH + H(+). The catalysed reaction is 2-hydroxyglutarate + NADP(+) = 2-oxoglutarate + NADPH + H(+). Functionally, catalyzes the NADPH-dependent reduction of 2-oxoglutarate and 2-oxobutanoate, leading to the respective 2-hydroxycarboxylate. Cannot use NADH instead of NADPH as a redox partner. Do not catalyze the reverse reactions. In Escherichia coli (strain K12), this protein is Hydroxycarboxylate dehydrogenase A.